The sequence spans 499 residues: uncharacterized protein (499 aa).

FAD-binding positions include 6–35 (EAVI…VIER) and 272–282 (YRDGRIFLAGD).

This sequence belongs to the PheA/TfdB FAD monooxygenase family. The cofactor is FAD.

This is an uncharacterized protein from Bacillus subtilis (strain 168).